A 677-amino-acid polypeptide reads, in one-letter code: Membrane-associated tyrosine- and threonine-specific cdc2-inhibitory kinase wee-1.3 (677 aa).

A compositionally biased stretch (polar residues) spans 1–22 (MDDTEGNSSMDSIRNGQSSPLP). The tract at residues 1 to 30 (MDDTEGNSSMDSIRNGQSSPLPQVTPRLPQ) is disordered. A Protein kinase domain is found at 108-355 (FQIDEIIGRG…SRDLLDHPVI (248 aa)). ATP contacts are provided by residues 114-122 (IGRGSFGEV) and K137. D228 functions as the Proton acceptor in the catalytic mechanism. 2 residues coordinate Mg(2+): N233 and D246. Disordered regions lie at residues 478 to 526 (FDND…GTPR) and 632 to 677 (EPSN…GDEV). Over residues 489 to 499 (ATCSSSNSSAI) the composition is skewed to polar residues. Residues 638-652 (TVDHHTILEQSESPR) show a composition bias toward basic and acidic residues.

Belongs to the protein kinase superfamily. Ser/Thr protein kinase family. WEE1 subfamily.

It is found in the golgi apparatus membrane. Its subcellular location is the cytoplasm. The enzyme catalyses L-seryl-[protein] + ATP = O-phospho-L-seryl-[protein] + ADP + H(+). It carries out the reaction L-threonyl-[protein] + ATP = O-phospho-L-threonyl-[protein] + ADP + H(+). Acts as a negative regulator of entry into mitosis (G2 to M transition) by phosphorylation of the CDK1 kinase during oocyte maturation. Required for oocyte maturation, embryonic development, germline proliferation and initiation of meiosis during spermatogenesis. Required for chromosome structure during mitosis and negative regulation of nuclear envelope breakdown. This Caenorhabditis elegans protein is Membrane-associated tyrosine- and threonine-specific cdc2-inhibitory kinase wee-1.3 (wee-1.3).